Reading from the N-terminus, the 443-residue chain is MKYKEINFFKGHPSSRLLPREAVIQATAAILGPETREYDNDPYNRHPLTYGSDEGALWVREQICTFLNDQLFKFENGARSRTRADYLNLNSGASYGMLNILLQTTLPHNGYTRQAFIITPTYFLINNCFTDAGFKGKMTAINEQGHDSIDFESLISALEQHEAEPQPHSTTEMIQGPKLTKKVYRYVMYCIPTFANPSGNTYSLETRRRLIDIARKYDMLIITDDVYDILDYTTPSDELPSPPLRMVHIDRSTAPSGEDSFGNTVSNATFSKLIAPGLRFGYHESINANLARQLSKGGANVSGGTPSQLNSMIVGEMLRSGAAQRCIAHLRSVYSERATVLTSALKKYMPLGTEIMPLKGGYFTWITLPPAYNAMEISTILAKKFNVILADGSNFEVIGDEKNWGQSCFRLSISFLEVDDIDRGIELFGAVCKSHAITNNITM.

This is an uncharacterized protein from Saccharomyces cerevisiae (strain ATCC 204508 / S288c) (Baker's yeast).